A 136-amino-acid chain; its full sequence is uncharacterized protein (136 aa).

This is an uncharacterized protein from Saccharomyces cerevisiae (strain ATCC 204508 / S288c) (Baker's yeast).